A 335-amino-acid polypeptide reads, in one-letter code: Aliphatic sulfonates import ATP-binding protein SsuB (335 aa).

The disordered stretch occupies residues 29 to 61; that stretch reads DGDAQDAAVYERDGGAHAPPFASGGAPPDGDRA. The ABC transporter domain maps to 74-293; it reads VRLTRVSKRY…ARASAAFAAL (220 aa). Position 106–113 (106–113) interacts with ATP; the sequence is GRSGCGKS. Residues 308–335 form a disordered region; that stretch reads APAAPNAAGPEGASRGRAAPASGLRWAV.

The protein belongs to the ABC transporter superfamily. Aliphatic sulfonates importer (TC 3.A.1.17.2) family. The complex is composed of two ATP-binding proteins (SsuB), two transmembrane proteins (SsuC) and a solute-binding protein (SsuA).

Its subcellular location is the cell inner membrane. It carries out the reaction ATP + H2O + aliphatic sulfonate-[sulfonate-binding protein]Side 1 = ADP + phosphate + aliphatic sulfonateSide 2 + [sulfonate-binding protein]Side 1.. In terms of biological role, part of the ABC transporter complex SsuABC involved in aliphatic sulfonates import. Responsible for energy coupling to the transport system. The polypeptide is Aliphatic sulfonates import ATP-binding protein SsuB (Burkholderia pseudomallei (strain 1710b)).